Reading from the N-terminus, the 491-residue chain is Cobyric acid synthase (491 aa).

The GATase cobBQ-type domain maps to 250–439; that stretch reads EVTIAVIRLP…LHGIFDNGAW (190 aa). Cys331 acts as the Nucleophile in catalysis. His431 is an active-site residue.

Belongs to the CobB/CobQ family. CobQ subfamily.

Its pathway is cofactor biosynthesis; adenosylcobalamin biosynthesis. Functionally, catalyzes amidations at positions B, D, E, and G on adenosylcobyrinic A,C-diamide. NH(2) groups are provided by glutamine, and one molecule of ATP is hydrogenolyzed for each amidation. The protein is Cobyric acid synthase of Synechococcus sp. (strain ATCC 27144 / PCC 6301 / SAUG 1402/1) (Anacystis nidulans).